The primary structure comprises 92 residues: Small ribosomal subunit protein uS19 (92 aa).

This sequence belongs to the universal ribosomal protein uS19 family.

Its function is as follows. Protein S19 forms a complex with S13 that binds strongly to the 16S ribosomal RNA. This is Small ribosomal subunit protein uS19 from Bacillus cytotoxicus (strain DSM 22905 / CIP 110041 / 391-98 / NVH 391-98).